Reading from the N-terminus, the 23-residue chain is Acidic phospholipase A2 Cvv-E6c (23 aa).

The cofactor is Ca(2+). Contains 7 disulfide bonds. Expressed by the venom gland.

It localises to the secreted. It catalyses the reaction a 1,2-diacyl-sn-glycero-3-phosphocholine + H2O = a 1-acyl-sn-glycero-3-phosphocholine + a fatty acid + H(+). In terms of biological role, snake venom phospholipase A2 (PLA2) that significantly inhibits ADP-induced platelet aggregation in platelet-rich plasma of human, rabbit and guinea pig. PLA2 catalyzes the calcium-dependent hydrolysis of the 2-acyl groups in 3-sn-phosphoglycerides. This is Acidic phospholipase A2 Cvv-E6c from Crotalus viridis viridis (Prairie rattlesnake).